The sequence spans 146 residues: Large ribosomal subunit protein uL15x (146 aa).

Basic residues-rich tracts occupy residues 1 to 14 (MTTR…KRGH) and 21 to 30 (RIGKHRKHPG). The tract at residues 1-35 (MTTRFKKNRKKRGHVSAGHGRIGKHRKHPGGRGNA) is disordered.

This sequence belongs to the universal ribosomal protein uL15 family.

In Arabidopsis thaliana (Mouse-ear cress), this protein is Large ribosomal subunit protein uL15x (RPL27AC).